The following is a 592-amino-acid chain: Aspartate--tRNA(Asp/Asn) ligase (592 aa).

Glutamate 172 lines the L-aspartate pocket. Residues 196 to 199 are aspartate; it reads QLFK. Residue arginine 218 participates in L-aspartate binding. Residues 218–220 and glutamine 227 each bind ATP; that span reads RDE. Position 450 (histidine 450) interacts with L-aspartate. Glutamate 484 lines the ATP pocket. Residue arginine 491 participates in L-aspartate binding. ATP is bound at residue 536-539; that stretch reads GLDR.

Belongs to the class-II aminoacyl-tRNA synthetase family. Type 1 subfamily. In terms of assembly, homodimer.

The protein resides in the cytoplasm. The catalysed reaction is tRNA(Asx) + L-aspartate + ATP = L-aspartyl-tRNA(Asx) + AMP + diphosphate. Aspartyl-tRNA synthetase with relaxed tRNA specificity since it is able to aspartylate not only its cognate tRNA(Asp) but also tRNA(Asn). Reaction proceeds in two steps: L-aspartate is first activated by ATP to form Asp-AMP and then transferred to the acceptor end of tRNA(Asp/Asn). In Thioalkalivibrio sulfidiphilus (strain HL-EbGR7), this protein is Aspartate--tRNA(Asp/Asn) ligase.